A 79-amino-acid polypeptide reads, in one-letter code: CDC42 small effector protein 1 (79 aa).

S-palmitoyl cysteine attachment occurs at residues cysteine 10 and cysteine 11. One can recognise a CRIB domain in the interval 30–43 (IGEPMNFVHLTHIG). The segment at 48 to 79 (GAGDGLAMTGAVQEQMRSKGNRDRPWSNSRAL) is disordered. A compositionally biased stretch (basic and acidic residues) spans 63-72 (MRSKGNRDRP).

It belongs to the CDC42SE/SPEC family. As to quaternary structure, interacts with CDC42 (in GTP-bound form). Interacts weakly with RAC1 and not at all with RHOA.

Its subcellular location is the cytoplasm. It localises to the cytoskeleton. The protein resides in the cell membrane. Its function is as follows. Probably involved in the organization of the actin cytoskeleton by acting downstream of CDC42, inducing actin filament assembly. Alters CDC42-induced cell shape changes. In activated T-cells, may play a role in CDC42-mediated F-actin accumulation at the immunological synapse. May play a role in early contractile events in phagocytosis in macrophages. In Rattus norvegicus (Rat), this protein is CDC42 small effector protein 1 (Cdc42se1).